Reading from the N-terminus, the 477-residue chain is 3-isopropylmalate dehydratase large subunit 1 (477 aa).

[4Fe-4S] cluster contacts are provided by Cys357, Cys417, and Cys420.

The protein belongs to the aconitase/IPM isomerase family. LeuC type 1 subfamily. Heterodimer of LeuC and LeuD. The cofactor is [4Fe-4S] cluster.

It catalyses the reaction (2R,3S)-3-isopropylmalate = (2S)-2-isopropylmalate. It participates in amino-acid biosynthesis; L-leucine biosynthesis; L-leucine from 3-methyl-2-oxobutanoate: step 2/4. Catalyzes the isomerization between 2-isopropylmalate and 3-isopropylmalate, via the formation of 2-isopropylmaleate. The sequence is that of 3-isopropylmalate dehydratase large subunit 1 from Bradyrhizobium diazoefficiens (strain JCM 10833 / BCRC 13528 / IAM 13628 / NBRC 14792 / USDA 110).